The sequence spans 676 residues: E3 ubiquitin-protein ligase ICP0 (676 aa).

The RING-type zinc-finger motif lies at 13–52 (CCICLDAITGAARALPCLHAFCLACIRRWLEGRPTCPLCK). Disordered stretches follow at residues 101–135 (DLTA…EAAG), 266–486 (HLIP…PAPI), and 555–676 (AAIS…AWRQ). Residues 110–135 (PGAGGEAGAAGGSEAGGGAGGAEAAG) show a composition bias toward gly residues. Over residues 286-303 (SDSDSEGSEDDSWSESEE) the composition is skewed to acidic residues. The span at 304–314 (SSSGLSTSDLT) shows a compositional bias: low complexity. Residues 315-328 (AIDDTETEPETDAE) are compositionally biased toward acidic residues. The span at 351–361 (YVSTRGRQTPA) shows a compositional bias: polar residues. 2 stretches are compositionally biased toward low complexity: residues 375 to 388 (GRAA…SSRS) and 397 to 411 (LPAA…QARA). Residues 422-439 (GAGLGVAAGETAGWGVGS) are compositionally biased toward gly residues. Residues 440–450 (EEGRGERRAKL) are compositionally biased toward basic and acidic residues. The span at 474–484 (TPAPAPAPAPA) shows a compositional bias: pro residues. Low complexity predominate over residues 555-597 (AAISTRAPTPSPAGRAPAADPRRAGAPALAGAARAEAGRNGNP).

Post-translationally, auto-ubiquitinated. In terms of processing, the strongly acidic region might serve as a transcriptional activation domain, possibly regulated through phosphorylation by casein kinase II.

It carries out the reaction S-ubiquitinyl-[E2 ubiquitin-conjugating enzyme]-L-cysteine + [acceptor protein]-L-lysine = [E2 ubiquitin-conjugating enzyme]-L-cysteine + N(6)-ubiquitinyl-[acceptor protein]-L-lysine.. Evades nuclear antiviral defenses triggered by dsDNA viruses. Acts during the initial stages of lytic infection and the reactivation of latent viral genome. Prevents the antiviral effect of nuclear bodies by degrading host PML and SP100. The polypeptide is E3 ubiquitin-protein ligase ICP0 (BICP0) (Bos taurus (Bovine)).